We begin with the raw amino-acid sequence, 389 residues long: Leucine aminopeptidase 1 (389 aa).

The first 18 residues, 1–18, serve as a signal peptide directing secretion; it reads MKSAALLLPLYTAAFAAA. The propeptide occupies 19–89; the sequence is AFHHEHAQAV…TLNHRINAES (71 aa). N-linked (GlcNAc...) asparagine glycosylation is found at Asn99, Asn146, and Asn156. His188, Asp207, Glu246, and Asp273 together coordinate Zn(2+). An intrachain disulfide couples Cys322 to Cys326. A Zn(2+)-binding site is contributed by His355.

This sequence belongs to the peptidase M28 family. M28E subfamily. In terms of assembly, monomer. Zn(2+) serves as cofactor.

It localises to the secreted. In terms of biological role, extracellular aminopeptidase that allows assimilation of proteinaceous substrates. In Pyrenophora tritici-repentis (strain Pt-1C-BFP) (Wheat tan spot fungus), this protein is Leucine aminopeptidase 1 (lap1).